The sequence spans 425 residues: 1,4-beta-D-glucan glucohydrolase (425 aa).

Glutamate 164 (proton donor) is an active-site residue. Residue glutamate 349 is the Nucleophile of the active site.

The protein belongs to the glycosyl hydrolase 1 family. In terms of assembly, monomer.

The enzyme catalyses Hydrolysis of (1-&gt;4)-linkages in (1-&gt;4)-beta-D-glucans, to remove successive glucose units.. It catalyses the reaction Hydrolysis of terminal, non-reducing beta-D-glucosyl residues with release of beta-D-glucose.. The protein operates within glycan metabolism; cellulose degradation. It functions in the pathway glycan metabolism; beta-D-glucan degradation. Broad substrate specificity glycosidase. Releases glucose from soluble glucooligomers, with a preference for longer oligomers; acts more readily on cellotetraose than on cellobiose. Displays similar activities towards the disaccharides lactose and cellobiose. Is also able to hydrolyze various aryl-beta-glycosides in vitro. The polypeptide is 1,4-beta-D-glucan glucohydrolase (bglA) (Thermotoga neapolitana).